The sequence spans 339 residues: Deubiquitinase and deneddylase Dub2 (339 aa).

The chain crosses the membrane as a helical span at residues 36–56 (IIIALFLIVISCGLILCAYTF). Active-site residues include His-203, Asp-220, and Cys-282.

Belongs to the peptidase C48 family.

The protein localises to the secreted. It localises to the host cell. Its subcellular location is the membrane. Its function is as follows. Effector proteins function to alter host cell physiology and promote bacterial survival in host tissues. This protease possesses deubiquitinating and deneddylating activities. This is Deubiquitinase and deneddylase Dub2 (cdu2) from Chlamydia trachomatis serovar A (strain ATCC VR-571B / DSM 19440 / HAR-13).